Consider the following 117-residue polypeptide: uncharacterized protein (117 aa).

The tract at residues 16 to 56 (FSQSSDGRSNGGGSSSGDSVSTTSDGLLTTGTSPNTSSTSL) is disordered. A compositionally biased stretch (low complexity) spans 31–56 (SGDSVSTTSDGLLTTGTSPNTSSTSL).

This is an uncharacterized protein from Saccharomyces cerevisiae (strain ATCC 204508 / S288c) (Baker's yeast).